Here is a 193-residue protein sequence, read N- to C-terminus: Ion-translocating oxidoreductase complex subunit A (193 aa).

6 helical membrane passes run 5–25 (LLLF…FLGL), 47–67 (FVMT…LVPL), 72–92 (LRTM…EMVV), 102–122 (LLGI…VALL), 134–154 (ALYG…FAAI), and 171–191 (AIAL…SGLV).

This sequence belongs to the NqrDE/RnfAE family. As to quaternary structure, the complex is composed of six subunits: RnfA, RnfB, RnfC, RnfD, RnfE and RnfG.

Its subcellular location is the cell inner membrane. Functionally, part of a membrane-bound complex that couples electron transfer with translocation of ions across the membrane. This Cronobacter sakazakii (strain ATCC BAA-894) (Enterobacter sakazakii) protein is Ion-translocating oxidoreductase complex subunit A.